A 925-amino-acid chain; its full sequence is Bifunctional glutamine synthetase adenylyltransferase/adenylyl-removing enzyme (925 aa).

Residues 1–426 are adenylyl removase; the sequence is MTDASDLLSL…AQFDQVFADK (426 aa). An adenylyl transferase region spans residues 436–925; it reads DQAAGCIWSG…AALWARVFGA (490 aa).

This sequence belongs to the GlnE family. It depends on Mg(2+) as a cofactor.

It carries out the reaction [glutamine synthetase]-O(4)-(5'-adenylyl)-L-tyrosine + phosphate = [glutamine synthetase]-L-tyrosine + ADP. The enzyme catalyses [glutamine synthetase]-L-tyrosine + ATP = [glutamine synthetase]-O(4)-(5'-adenylyl)-L-tyrosine + diphosphate. In terms of biological role, involved in the regulation of glutamine synthetase GlnA, a key enzyme in the process to assimilate ammonia. When cellular nitrogen levels are high, the C-terminal adenylyl transferase (AT) inactivates GlnA by covalent transfer of an adenylyl group from ATP to specific tyrosine residue of GlnA, thus reducing its activity. Conversely, when nitrogen levels are low, the N-terminal adenylyl removase (AR) activates GlnA by removing the adenylyl group by phosphorolysis, increasing its activity. The regulatory region of GlnE binds the signal transduction protein PII (GlnB) which indicates the nitrogen status of the cell. The sequence is that of Bifunctional glutamine synthetase adenylyltransferase/adenylyl-removing enzyme from Burkholderia mallei (strain ATCC 23344).